A 533-amino-acid chain; its full sequence is MVKVWKIGFGVFLPTALLFSACSFKDYIPTPSFRKDFSTENNFVKNKVPGKDDIYSKFYDLTFSLNFVNNQAQEFGTGWLIDWKGDENKNLSKNKEGQTASQTRSSSEQTTDQDANLFTAYIATNLHVADGLKNDQDYAPYNKDGWGQPYPYQQKTQSFLLGKYTKPNVQLVKTNYEKPEDAVIEQKLKEDSLLFIQTSTLPKTAYAAIDPVNFSYNPTRTNGFWTAGKYNVYNGGNSIGNYADFAVIEVPLVLSNPNDAKIYQEWIRPATQAYKYLGDVEGLFAKKGYRSYIQDFYHLLGYPVTKNTKSEFILGQSQGTVNHMSFSNDESNTTNTITKASLTQQPHKEQSAYVVRESGLPTLTMNVDKYTGAKGTHLVNVDQITDLSLGDGLIDFGGLSRFILQYHNVNYKQFGYGTILWDTNFGGGSSGSAIFNQNKQINSIYFGALVNVTTDRNENVGLGLGQILRAPNTFNSSHEVPYSYDLIFGDVNTTNFYAQFAKKHNTHMWSKIQSTQNGEIGFHKNSKTGQQRH.

The first 21 residues, 1–21, serve as a signal peptide directing secretion; it reads MVKVWKIGFGVFLPTALLFSA. A lipid anchor (N-palmitoyl cysteine) is attached at Cys22. A lipid anchor (S-diacylglycerol cysteine) is attached at Cys22. A disordered region spans residues 91–111; sequence LSKNKEGQTASQTRSSSEQTT. Over residues 97–111 the composition is skewed to polar residues; that stretch reads GQTASQTRSSSEQTT.

Belongs to the MG067/MG068/MG395 family.

It is found in the cell membrane. This is an uncharacterized protein from Mycoplasma pneumoniae (strain ATCC 29342 / M129 / Subtype 1) (Mycoplasmoides pneumoniae).